The primary structure comprises 281 residues: 2-dehydro-3-deoxyphosphooctonate aldolase (281 aa).

It belongs to the KdsA family.

The protein localises to the cytoplasm. The catalysed reaction is D-arabinose 5-phosphate + phosphoenolpyruvate + H2O = 3-deoxy-alpha-D-manno-2-octulosonate-8-phosphate + phosphate. It functions in the pathway carbohydrate biosynthesis; 3-deoxy-D-manno-octulosonate biosynthesis; 3-deoxy-D-manno-octulosonate from D-ribulose 5-phosphate: step 2/3. The protein operates within bacterial outer membrane biogenesis; lipopolysaccharide biosynthesis. This Pseudomonas aeruginosa (strain UCBPP-PA14) protein is 2-dehydro-3-deoxyphosphooctonate aldolase.